Reading from the N-terminus, the 192-residue chain is GTP-binding protein RHO2 (192 aa).

14–21 is a GTP binding site; sequence GDGACGKT. The short motif at 36–44 is the Effector region element; the sequence is YHPTVFENY. GTP contacts are provided by residues 61-65 and 119-122; these read DTAGQ and LKKD. C188 carries S-palmitoyl cysteine lipidation. C189 carries the post-translational modification Cysteine methyl ester. Residue C189 is the site of S-geranylgeranyl cysteine attachment. Positions 190-192 are cleaved as a propeptide — removed in mature form; it reads IIL.

Belongs to the small GTPase superfamily. Rho family. As to quaternary structure, interacts with BEM4.

The protein localises to the cell membrane. It catalyses the reaction GTP + H2O = GDP + phosphate + H(+). This chain is GTP-binding protein RHO2 (RHO2), found in Saccharomyces cerevisiae (strain ATCC 204508 / S288c) (Baker's yeast).